The chain runs to 608 residues: Threonine--tRNA ligase (608 aa).

Residues 1 to 143 form an editing domain region; that stretch reads MRVLYIHAER…SFKPEEGRAD (143 aa). Catalytic stretches follow at residues 194–490 and 195–490; these read PKYL…PRLP and KYLE…PRLP. Cys287, His338, and His459 together coordinate Zn(2+).

The protein belongs to the class-II aminoacyl-tRNA synthetase family. In terms of assembly, homodimer. The cofactor is Zn(2+).

The protein resides in the cytoplasm. The enzyme catalyses tRNA(Thr) + L-threonine + ATP = L-threonyl-tRNA(Thr) + AMP + diphosphate + H(+). In terms of biological role, catalyzes the attachment of threonine to tRNA(Thr) in a two-step reaction: L-threonine is first activated by ATP to form Thr-AMP and then transferred to the acceptor end of tRNA(Thr). Also edits incorrectly charged L-seryl-tRNA(Thr). This is Threonine--tRNA ligase from Pyrobaculum aerophilum (strain ATCC 51768 / DSM 7523 / JCM 9630 / CIP 104966 / NBRC 100827 / IM2).